Consider the following 1273-residue polypeptide: Chitin synthase 7 (1273 aa).

Residues 1–69 form a disordered region; the sequence is MPAVERNAPF…LINPSSGGPG (69 aa). Over 1-79 the chain is Cytoplasmic; it reads MPAVERNAPF…FSAASRSKHR (79 aa). A helical transmembrane segment spans residues 80–100; the sequence is FSWWTAFSLFVTFWAPSPLLS. The Extracellular portion of the chain corresponds to 101–117; it reads SCCGLKDKQSRQAWREK. Residues 118 to 138 traverse the membrane as a helical segment; sequence VSLVFIAILLGGFIGFITMGL. Residues 139–360 are Cytoplasmic-facing; it reads NAALCPSASS…FISNLVLYCS (222 aa). A helical transmembrane segment spans residues 361 to 381; sequence LVVILAIVLIRFFMAVWFAWF. The Extracellular portion of the chain corresponds to 382 to 820; it reads MAGRMSSPPR…LCGTFCFSMQ (439 aa). An N-linked (GlcNAc...) asparagine glycan is attached at Asn412. A disordered region spans residues 416–451; it reads AAPWANKQRPPPSQPARRRRDSAQSATPSVPDSLSV. Residues Asn667 and Asn796 are each glycosylated (N-linked (GlcNAc...) asparagine). Residues 821–841 form a helical membrane-spanning segment; sequence FVVFMDLLGTAVLPISIALTY. The Cytoplasmic segment spans residues 842–857; it reads TLVVTYCLNPPHSFTE. The helical transmembrane segment at 858-878 threads the bilayer; that stretch reads AIPLMLLVAVIGMPALLILLA. The Extracellular segment spans residues 879 to 881; it reads TRK. A helical membrane pass occupies residues 882–902; that stretch reads VVYVLWMLIYLLALPVWNFVL. The Cytoplasmic segment spans residues 903–1273; it reads PVYSFWHFDD…RGRSYHDRFS (371 aa). 2 disordered regions span residues 966 to 1009 and 1126 to 1273; these read RELE…SVTV and NGGG…DRFS. A compositionally biased stretch (low complexity) spans 1000 to 1009; the sequence is SDSFSDSVTV. Positions 1215 to 1232 are enriched in pro residues; sequence QHPPQPSQPPQPPQPAQP. The span at 1233-1246 shows a compositional bias: low complexity; it reads TRPGGAPAAPPRGA.

The protein belongs to the chitin synthase family. Class IV subfamily.

The protein resides in the cell membrane. The protein localises to the cytoplasmic vesicle membrane. The enzyme catalyses [(1-&gt;4)-N-acetyl-beta-D-glucosaminyl](n) + UDP-N-acetyl-alpha-D-glucosamine = [(1-&gt;4)-N-acetyl-beta-D-glucosaminyl](n+1) + UDP + H(+). Polymerizes chitin, a structural polymer of the cell wall and septum, by transferring the sugar moiety of UDP-GlcNAc to the non-reducing end of the growing chitin polymer. This Mycosarcoma maydis (Corn smut fungus) protein is Chitin synthase 7.